Here is a 353-residue protein sequence, read N- to C-terminus: Thiamine thiazole synthase 1, chloroplastic (353 aa).

The N-terminal 48 residues, 1 to 48, are a transit peptide targeting the chloroplast; it reads MATLTSSICSKPKASVFDPHKSSFHGVPIATQARLSPVKSTPVNLAVT. Residues Ala97, 117-118, Gly125, and Ala190 each bind substrate; that span reads EQ. 2,3-didehydroalanine (Cys) is present on Cys219. Residues Asp221, His236, Met288, and 298 to 300 contribute to the substrate site; that span reads RMG.

The protein belongs to the THI4 family. In terms of assembly, homooctamer. Fe cation is required as a cofactor. Post-translationally, during the catalytic reaction, a sulfide is transferred from Cys-219 to a reaction intermediate, generating a dehydroalanine residue.

The protein resides in the plastid. It localises to the chloroplast. It carries out the reaction [ADP-thiazole synthase]-L-cysteine + glycine + NAD(+) = [ADP-thiazole synthase]-dehydroalanine + ADP-5-ethyl-4-methylthiazole-2-carboxylate + nicotinamide + 3 H2O + 2 H(+). In terms of biological role, involved in biosynthesis of the thiamine precursor thiazole. Catalyzes the conversion of NAD and glycine to adenosine diphosphate 5-(2-hydroxyethyl)-4-methylthiazole-2-carboxylic acid (ADT), an adenylated thiazole intermediate. The reaction includes an iron-dependent sulfide transfer from a conserved cysteine residue of the protein to a thiazole intermediate. The enzyme can only undergo a single turnover, which suggests it is a suicide enzyme. May have additional roles in adaptation to various stress conditions and in DNA damage tolerance. The protein is Thiamine thiazole synthase 1, chloroplastic of Vitis vinifera (Grape).